The primary structure comprises 309 residues: Porphobilinogen deaminase (309 aa).

At C241 the chain carries S-(dipyrrolylmethanemethyl)cysteine.

It belongs to the HMBS family. In terms of assembly, monomer. Dipyrromethane serves as cofactor.

The catalysed reaction is 4 porphobilinogen + H2O = hydroxymethylbilane + 4 NH4(+). It functions in the pathway porphyrin-containing compound metabolism; protoporphyrin-IX biosynthesis; coproporphyrinogen-III from 5-aminolevulinate: step 2/4. Its function is as follows. Tetrapolymerization of the monopyrrole PBG into the hydroxymethylbilane pre-uroporphyrinogen in several discrete steps. The chain is Porphobilinogen deaminase from Bacillus cereus (strain B4264).